The sequence spans 186 residues: Methyl-CpG-binding domain-containing protein 4 (186 aa).

A CW-type zinc finger spans residues 22 to 77 (GRLIDTYAAQCDNCHKWRVIDSQEEYEDIRSKMLEDPFNCQKKQGMSCEEPADIDY). Positions 31-69 (QCDNCHKWRVIDSQEEYEDIRSKMLEDPFNCQKKQGMSC) match the MBD-associated domain (MAD) motif. Zn(2+) is bound by residues cysteine 32, cysteine 35, cysteine 61, and cysteine 69. Residues 83 to 153 (WVIDKPGLPK…GDFNFTVPKV (71 aa)) enclose the MBD domain. Residues 154–186 (MEDTVPPDPKLGSPFPSTTTTTSEKSSVKQSHN) are disordered. Low complexity predominate over residues 166 to 178 (SPFPSTTTTTSEK).

Expressed in rosette leaves, buds, flowers, stems, mature seeds and roots.

It localises to the nucleus. Functionally, transcriptional regulator that binds CpG, CpNpN and CpNpG (N is A, T, or C) islands in promoters regardless the DNA methylation status. Plays probably a role in gene silencing. This Arabidopsis thaliana (Mouse-ear cress) protein is Methyl-CpG-binding domain-containing protein 4 (MBD4).